We begin with the raw amino-acid sequence, 462 residues long: Argininosuccinate lyase (462 aa).

The protein belongs to the lyase 1 family. Argininosuccinate lyase subfamily.

Its subcellular location is the cytoplasm. It carries out the reaction 2-(N(omega)-L-arginino)succinate = fumarate + L-arginine. Its pathway is amino-acid biosynthesis; L-arginine biosynthesis; L-arginine from L-ornithine and carbamoyl phosphate: step 3/3. The polypeptide is Argininosuccinate lyase (Gloeothece citriformis (strain PCC 7424) (Cyanothece sp. (strain PCC 7424))).